Consider the following 792-residue polypeptide: Phenylalanine--tRNA ligase beta subunit (792 aa).

Residues 38-148 (NTKLAGFIVA…DDYKVGNKFF (111 aa)) form the tRNA-binding domain. In terms of domain architecture, B5 spans 406 to 482 (EADTKVSFDY…RIYGYDKIKE (77 aa)). Mg(2+) is bound by residues Asp460, Asp466, Glu469, and Glu470. An FDX-ACB domain is found at 698 to 790 (YKHQSVKRDF…VHKNTGGILR (93 aa)).

Belongs to the phenylalanyl-tRNA synthetase beta subunit family. Type 1 subfamily. Tetramer of two alpha and two beta subunits. The cofactor is Mg(2+).

The protein localises to the cytoplasm. It catalyses the reaction tRNA(Phe) + L-phenylalanine + ATP = L-phenylalanyl-tRNA(Phe) + AMP + diphosphate + H(+). This Wolbachia sp. subsp. Brugia malayi (strain TRS) protein is Phenylalanine--tRNA ligase beta subunit.